The primary structure comprises 358 residues: Oxidase FUB9 (358 aa).

An FMN hydroxy acid dehydrogenase domain is found at 6–350 (SSKPQIFSIQ…SPAHLSILNA (345 aa)). A 2-oxocarboxylate is bound at residue Tyr32. FMN-binding residues include Ser114, Gln138, and Thr166. An a 2-oxocarboxylate-binding site is contributed by Arg175. FMN is bound at residue Lys221. His245 functions as the Proton acceptor in the catalytic mechanism. Arg248 contributes to the a 2-oxocarboxylate binding site. FMN-binding positions include 276–280 (DGGFR) and 299–300 (GR).

The protein belongs to the FMN-dependent alpha-hydroxy acid dehydrogenase family. The cofactor is FMN.

It functions in the pathway mycotoxin biosynthesis. In terms of biological role, oxidase; part of the gene cluster that mediates the biosynthesis of fusaric acid, a mycotoxin with low to moderate toxicity to animals and humans, but with high phytotoxic properties. L-aspartate is suggested as fusaric acid amino acid precursor that is activated and further processed to O-acetyl-L-homoserine by cluster enzymes aspartate kinase FUB3 and homoserine O-acetyltransferase FUB5, as well as enzymes of the primary metabolism. The polyketide synthase (PKS) FUB1 generates the triketide trans-2-hexenal which is presumptively released by the hydrolase FUB4 and linked to the NRPS-bound amino acid precursor by NAD(P)-dependent dehydrogenase FUB6. FUB1, FUB4, and the non-canonical NRPS Fub8 may form an enzyme complex. Further processing of the NRPS-bound intermediate might be carried out by FUB6 and the sulfhydrylase FUB7, enabling a spontaneous electrocyclization to close the carbon backbone of fusaric acid. Dihydrofusaric acid is likely to be released via reduction by the thioester reductase (TR) domain of FUB8 whereupon the final oxidation to fusaric acid may (also) be performed by the FMN-dependent dehydrogenase FUB9. This chain is Oxidase FUB9, found in Gibberella fujikuroi (strain CBS 195.34 / IMI 58289 / NRRL A-6831) (Bakanae and foot rot disease fungus).